Reading from the N-terminus, the 228-residue chain is 2-C-methyl-D-erythritol 4-phosphate cytidylyltransferase (228 aa).

Belongs to the IspD/TarI cytidylyltransferase family. IspD subfamily.

It catalyses the reaction 2-C-methyl-D-erythritol 4-phosphate + CTP + H(+) = 4-CDP-2-C-methyl-D-erythritol + diphosphate. The protein operates within isoprenoid biosynthesis; isopentenyl diphosphate biosynthesis via DXP pathway; isopentenyl diphosphate from 1-deoxy-D-xylulose 5-phosphate: step 2/6. In terms of biological role, catalyzes the formation of 4-diphosphocytidyl-2-C-methyl-D-erythritol from CTP and 2-C-methyl-D-erythritol 4-phosphate (MEP). In Actinobacillus pleuropneumoniae serotype 3 (strain JL03), this protein is 2-C-methyl-D-erythritol 4-phosphate cytidylyltransferase.